Consider the following 20-residue polypeptide: Pregnancy-associated glycoprotein 57 (20 aa).

This sequence belongs to the peptidase A1 family. Glycosylated.

Its subcellular location is the secreted. The chain is Pregnancy-associated glycoprotein 57 from Ovis aries (Sheep).